The following is a 258-amino-acid chain: Beta carbonic anhydrase 3 (258 aa).

The signal sequence occupies residues 1–28 (MSTESYEDAIKRLGELLSKKSDLGNVAA). The stretch at 24 to 54 (GNVAAAKIKKLTDELEELDSNKLDAVERIKS) forms a coiled coil. Residue threonine 35 is modified to Phosphothreonine. Serine 95 is modified (phosphoserine). Cysteine 201 carries the S-nitrosocysteine modification.

It belongs to the beta-class carbonic anhydrase family. Strongly expressed in aerial tissues including leaves, stems, flowers and siliques, and, to a lower extent, in roots.

The protein resides in the cytoplasm. Its subcellular location is the cytosol. The enzyme catalyses hydrogencarbonate + H(+) = CO2 + H2O. Reversible hydration of carbon dioxide. This chain is Beta carbonic anhydrase 3 (BCA3), found in Arabidopsis thaliana (Mouse-ear cress).